A 357-amino-acid polypeptide reads, in one-letter code: BLOC-1-related complex subunit 6 (357 aa).

Residues 20–196 form a disordered region; it reads HQALVFGGGP…SGAGGGRRAT (177 aa). Residues 90–99 show a composition bias toward low complexity; it reads GAGSRRGAPG. Residues 138 to 149 are compositionally biased toward acidic residues; the sequence is EQQEEEDNDEEA. Positions 150–162 are enriched in low complexity; that stretch reads AAGSRAGRSFSSR. Serine 168 is subject to Phosphoserine. Position 196 is a phosphothreonine (threonine 196). Serine 199 is subject to Phosphoserine. Positions 227–256 are disordered; sequence LSGAPPPPPSAPARPCPAPAPTPTPAIPPI. Over residues 230–256 the composition is skewed to pro residues; sequence APPPPPSAPARPCPAPAPTPTPAIPPI.

It belongs to the BORCS6 family. In terms of assembly, component of the BLOC-one-related complex (BORC) which is composed of BLOC1S1, BLOC1S2, BORCS5, BORCS6, BORCS7, BORCS8, KXD1 and SNAPIN.

The protein resides in the lysosome membrane. In terms of biological role, as part of the BORC complex may play a role in lysosomes movement and localization at the cell periphery. Associated with the cytosolic face of lysosomes, the BORC complex may recruit ARL8B and couple lysosomes to microtubule plus-end-directed kinesin motor. This is BLOC-1-related complex subunit 6 from Homo sapiens (Human).